We begin with the raw amino-acid sequence, 146 residues long: VHFSDAERDAIAAIWGKIHIDEIGPQSLARVLIVYPWTQRYFSKFGDMSSVAAISGNPKVAAHGKVVLGALEKGVKNLDNVKATYSNLSQLHCEKLNVDPDNFRALGDCITIVVASKFGNAFTPELQNAWHKFLSVVAAALSSRYF.

The 145-residue stretch at His-2–Phe-146 folds into the Globin domain. Heme b-binding residues include His-63 and His-92.

Belongs to the globin family. As to quaternary structure, heterotetramer of two alpha chains and two beta chains. As to expression, red blood cells.

In terms of biological role, involved in oxygen transport from gills to the various peripheral tissues. This chain is Hemoglobin cathodic subunit beta (hbb), found in Hoplosternum littorale (Hassar).